The following is a 1481-amino-acid chain: Cystic fibrosis transmembrane conductance regulator (1481 aa).

The Cytoplasmic portion of the chain corresponds to 1–77 (MQRSPLEKAS…KLINALRRCF (77 aa)). A helical transmembrane segment spans residues 78–98 (FWRFMFYGIILYLGEVTKAVQ). Residues 81–365 (FMFYGIILYL…WAVQTWYDSL (285 aa)) enclose the ABC transmembrane type-1 1 domain. Residues 99 to 122 (PLLLGRIIASYDPDNKAERSIAIY) lie on the Extracellular side of the membrane. The helical transmembrane segment at 123–146 (LGIGLCLLFIVRTLLLHPAIFGLH) threads the bilayer. At 147–195 (HIGMQMRIAMFSLIYKKTLKLSSRVLDKISIGQLVSLLSNNLNKFDEGL) the chain is on the cytoplasmic side. Residues 196-216 (ALAHFVWIAPLQVTLLMGLLW) traverse the membrane as a helical segment. At 217–222 (ELLQAF) the chain is on the extracellular side. The helical transmembrane segment at 223-243 (TFCGLAFLVVLAFLQAGLGKM) threads the bilayer. Residues 244–298 (MMKYRDQRAGKINERLVITSEIIENIQSVKAYCWEEAMEKIIENLRQTELKLTRK) are Cytoplasmic-facing. The chain crosses the membrane as a helical span at residues 299 to 319 (AAYVRYLNSSAFFFSGFFVVF). At 320–339 (LSVLPYALLKGIILRKIFTT) the chain is on the extracellular side. The helical transmembrane segment at 340–358 (ISFCIVLRMAVTRQFPWAV) threads the bilayer. Residues 359 to 858 (QTWYDSLGAI…YLRYITVHKS (500 aa)) lie on the Cytoplasmic side of the membrane. ATP contacts are provided by residues Trp401, 457-464 (GSTGAGKT), and Gln492. The 223-residue stretch at 423–645 (NGDNNLFFSN…RPDFSSKLMG (223 aa)) folds into the ABC transporter 1 domain. Residue Cys523 is the site of S-palmitoyl cysteine attachment. Phosphoserine occurs at positions 548 and 659. The segment at 653-831 (TAERRNSIIT…EEINEEDLRD (179 aa)) is disordered R region. Ser669 bears the Phosphoserine; by PKA mark. Ser685 carries the post-translational modification Phosphoserine. A Glycyl lysine isopeptide (Lys-Gly) (interchain with G-Cter in ubiquitin) cross-link involves residue Lys687. Phosphoserine occurs at positions 699 and 711. Position 716 is a phosphothreonine (Thr716). Residues Ser736, Ser767, Ser790, Ser795, and Ser813 each carry the phosphoserine modification. A helical membrane pass occupies residues 859–879 (LMFVLIWCLVVFLAEVAASLV). Residues 859–1155 (LMFVLIWCLV…AVNSSIDVDS (297 aa)) enclose the ABC transmembrane type-1 2 domain. Over 880 to 918 (VLCLFPKILFQDKGNSTKSANNSYAVIITSTSSYYIFYI) the chain is Extracellular. 2 N-linked (GlcNAc...) asparagine glycosylation sites follow: Asn894 and Asn900. Residues 919-939 (YVGVADTLLALGLFRGLPLVH) form a discontinuously helical membrane-spanning segment. The Cytoplasmic segment spans residues 940-990 (TLITVSKTLHHKMLQSVLQAPMSTLNTLKTGGILNRFSKDIAVLDDLLPLT). Residues 991 to 1011 (IFDFVQLLLIVIGAVVVVSVL) traverse the membrane as a helical segment. Residues 1012 to 1013 (QP) are Extracellular-facing. The helical transmembrane segment at 1014–1034 (YIFLATVPVIAAFILLRAYFL) threads the bilayer. The Cytoplasmic portion of the chain corresponds to 1035 to 1095 (HTSQQLKQLE…TANWFLYLST (61 aa)). A helical transmembrane segment spans residues 1096-1116 (LRWFQMRIEMIFVIFFIAVTF). The Extracellular segment spans residues 1117–1130 (ISILTTGEGEGRVG). A helical transmembrane segment spans residues 1131–1151 (IILTLAMNIMGTLQWAVNSSI). Residues 1152 to 1481 (DVDSLMRSVS…TEEEVQETKI (330 aa)) lie on the Cytoplasmic side of the membrane. The ABC transporter 2 domain occupies 1211-1444 (MTVKDLTAKY…KSLFRQAISP (234 aa)). Residues Tyr1220 and 1245–1252 (GRTGSGKS) contribute to the ATP site. Residues 1387–1481 (RTLKQAFADC…TEEEVQETKI (95 aa)) are interaction with GORASP2. A lipid anchor (S-palmitoyl cysteine) is attached at Cys1396. Residues 1452–1481 (PQRNSSRQKSRSNIAALKEETEEEVQETKI) are disordered. The span at 1453–1464 (QRNSSRQKSRSN) shows a compositional bias: low complexity. The residue at position 1457 (Ser1457) is a Phosphoserine. Over residues 1471–1481 (ETEEEVQETKI) the composition is skewed to acidic residues. Positions 1479–1481 (TKI) match the PDZ-binding motif.

Belongs to the ABC transporter superfamily. ABCC family. CFTR transporter (TC 3.A.1.202) subfamily. Monomer; does not require oligomerization for channel activity. May form oligomers in the membrane. Interacts with SLC26A3, SLC26A6 and NHERF1. Interacts with SHANK2. Interacts with MYO6. Interacts (via C-terminus) with GOPC (via PDZ domain); this promotes CFTR internalization and thereby decreases channel activity. Interacts with SLC4A7 through NHERF1. Found in a complex with MYO5B and RAB11A. Interacts with ANO1. Interacts with SLC26A8. Interacts with AHCYL1; the interaction increases CFTR activity. Interacts with CSE1L. The core-glycosylated form interacts with GORASP2 (via PDZ GRASP-type 1 domain) in respone to ER stress. Interacts with MARCHF2; the interaction leads to CFTR ubiqtuitination and degradation. Interacts with ADGRG2. Post-translationally, N-glycosylated. Phosphorylated; cAMP treatment promotes phosphorylation and activates the channel. Dephosphorylation decreases the ATPase activity (in vitro). Phosphorylation at PKA sites activates the channel. Phosphorylation at PKC sites enhances the response to phosphorylation by PKA. Phosphorylated by AMPK; this inhibits channel activity. In terms of processing, ubiquitinated, leading to its degradation in the lysosome. Deubiquitination by USP10 in early endosomes enhances its endocytic recycling to the cell membrane. Ubiquitinated by RNF185 during ER stress. Ubiquitinated by MARCHF2.

It is found in the apical cell membrane. It localises to the early endosome membrane. The protein localises to the cell membrane. The protein resides in the recycling endosome membrane. Its subcellular location is the endoplasmic reticulum membrane. It is found in the nucleus. It carries out the reaction ATP + H2O + closed Cl(-) channel = ADP + phosphate + open Cl(-) channel.. It catalyses the reaction chloride(in) = chloride(out). The catalysed reaction is hydrogencarbonate(in) = hydrogencarbonate(out). The enzyme catalyses ATP + H2O = ADP + phosphate + H(+). Epithelial ion channel that plays an important role in the regulation of epithelial ion and water transport and fluid homeostasis. Mediates the transport of chloride ions across the cell membrane. Possesses an intrinsic ATPase activity and utilizes ATP to gate its channel; the passive flow of anions through the channel is gated by cycles of ATP binding and hydrolysis by the ATP-binding domains. The ion channel is also permeable to HCO(3)(-); selectivity depends on the extracellular chloride concentration. Exerts its function also by modulating the activity of other ion channels and transporters. Contributes to the regulation of the pH and the ion content of the epithelial fluid layer. Modulates the activity of the epithelial sodium channel (ENaC) complex, in part by regulating the cell surface expression of the ENaC complex. May regulate bicarbonate secretion and salvage in epithelial cells by regulating the transporter SLC4A7. Can inhibit the chloride channel activity of ANO1. Plays a role in the chloride and bicarbonate homeostasis during sperm epididymal maturation and capacitation. This chain is Cystic fibrosis transmembrane conductance regulator, found in Muntiacus reevesi (Reeves' muntjac).